The following is a 104-amino-acid chain: Large ribosomal subunit protein uL24 (104 aa).

It belongs to the universal ribosomal protein uL24 family. As to quaternary structure, part of the 50S ribosomal subunit. Post-translationally, a methylated and unmethylated form are thought to exist.

One of two assembly initiator proteins, it binds directly to the 5'-end of the 23S rRNA, where it nucleates assembly of the 50S subunit. In terms of biological role, one of the proteins that surrounds the polypeptide exit tunnel on the outside of the subunit. The polypeptide is Large ribosomal subunit protein uL24 (Rhodopseudomonas palustris (strain ATCC BAA-98 / CGA009)).